Here is a 106-residue protein sequence, read N- to C-terminus: Thiosulfate sulfurtransferase GlpE (106 aa).

The 89-residue stretch at 17-105 (EQGEAKLVDI…WQRAQLPIVR (89 aa)) folds into the Rhodanese domain. Catalysis depends on Cys-65, which acts as the Cysteine persulfide intermediate.

It belongs to the GlpE family.

The protein resides in the cytoplasm. The catalysed reaction is thiosulfate + hydrogen cyanide = thiocyanate + sulfite + 2 H(+). The enzyme catalyses thiosulfate + [thioredoxin]-dithiol = [thioredoxin]-disulfide + hydrogen sulfide + sulfite + 2 H(+). Functionally, transferase that catalyzes the transfer of sulfur from thiosulfate to thiophilic acceptors such as cyanide or dithiols. May function in a CysM-independent thiosulfate assimilation pathway by catalyzing the conversion of thiosulfate to sulfite, which can then be used for L-cysteine biosynthesis. This Vibrio parahaemolyticus serotype O3:K6 (strain RIMD 2210633) protein is Thiosulfate sulfurtransferase GlpE.